Consider the following 317-residue polypeptide: Melanocyte-stimulating hormone receptor (317 aa).

Topologically, residues 1-37 are extracellular; that stretch reads MPVQGSQRRLLGSLNSTPTATPKLGLAANQTGAQCLE. An N-linked (GlcNAc...) asparagine glycan is attached at Asn-29. Residues 38 to 63 form a helical membrane-spanning segment; sequence VSIPDGLFLSLGLVSLVENVLVVAAI. Topologically, residues 64–72 are cytoplasmic; it reads ARNRNLHSP. Residues 73–93 form a helical membrane-spanning segment; sequence MYCFICCLALSDLLVSGSNML. Residues 94-118 lie on the Extracellular side of the membrane; it reads ETAVILLLEAGALAARAAVVQQLDN. The helical transmembrane segment at 119–140 threads the bilayer; it reads VIDVITCSSMLSSLCFLGAIAM. The Cytoplasmic portion of the chain corresponds to 141 to 163; sequence DRYISIFYALRYHSIVTLPRARG. A helical membrane pass occupies residues 164 to 183; that stretch reads VVAAIWVASILFSTLFIAYY. Residues 184 to 191 lie on the Extracellular side of the membrane; it reads DHVAVLLC. Residues 192 to 211 traverse the membrane as a helical segment; the sequence is LVVFFLAMLVLMAVLYVHML. Topologically, residues 212–240 are cytoplasmic; the sequence is ARACQHAQGIAQLHKRQRPAHQGVGLKGA. Residues 241-266 traverse the membrane as a helical segment; the sequence is ATLTILLGIFFLCWGPFFLHLTLIVL. Residues 267 to 279 are Extracellular-facing; that stretch reads CPQHPTCSCIFKN. Residues 280–300 traverse the membrane as a helical segment; it reads FNLFLALIICNAIIDPLIYAF. Over 301–317 the chain is Cytoplasmic; the sequence is RSQELRRTLKKVLLCSW. Cys-315 carries S-palmitoyl cysteine lipidation.

The protein belongs to the G-protein coupled receptor 1 family. Interacts with MGRN1, but does not undergo MGRN1-mediated ubiquitination; this interaction competes with GNAS-binding and thus inhibits agonist-induced cAMP production. Interacts with OPN3; the interaction results in a decrease in MC1R-mediated cAMP signaling and ultimately a decrease in melanin production in melanocytes.

The protein resides in the cell membrane. Functionally, receptor for MSH (alpha, beta and gamma) and ACTH. The activity of this receptor is mediated by G proteins which activate adenylate cyclase. Mediates melanogenesis, the production of eumelanin (black/brown) and phaeomelanin (red/yellow), via regulation of cAMP signaling in melanocytes. The polypeptide is Melanocyte-stimulating hormone receptor (MC1R) (Presbytis comata (Grizzled leaf monkey)).